The sequence spans 22 residues: thr operon leader peptide (22 aa).

The disordered stretch occupies residues 1 to 22 (MRNISLTTTIITTTDTTGNGAG). Positions 7 to 22 (TTTIITTTDTTGNGAG) are enriched in low complexity.

This sequence belongs to the thr operon leader peptide family.

This protein is involved in control of the biosynthesis of threonine. This Serratia marcescens protein is thr operon leader peptide.